The chain runs to 184 residues: Elongation factor P (184 aa).

Belongs to the elongation factor P family.

It localises to the cytoplasm. The protein operates within protein biosynthesis; polypeptide chain elongation. Involved in peptide bond synthesis. Stimulates efficient translation and peptide-bond synthesis on native or reconstituted 70S ribosomes in vitro. Probably functions indirectly by altering the affinity of the ribosome for aminoacyl-tRNA, thus increasing their reactivity as acceptors for peptidyl transferase. This is Elongation factor P from Variovorax paradoxus (strain S110).